The primary structure comprises 180 residues: Nucleoside triphosphate/diphosphate phosphatase (180 aa).

Arginine 26 (proton donor) is an active-site residue. Mg(2+)-binding residues include asparagine 90, aspartate 106, aspartate 108, aspartate 110, aspartate 123, and glutamate 126.

This sequence belongs to the Ntdp family. It depends on Mg(2+) as a cofactor.

The catalysed reaction is a ribonucleoside 5'-triphosphate + H2O = a ribonucleoside 5'-diphosphate + phosphate + H(+). It carries out the reaction a ribonucleoside 5'-diphosphate + H2O = a ribonucleoside 5'-phosphate + phosphate + H(+). Functionally, has nucleoside phosphatase activity towards nucleoside triphosphates and nucleoside diphosphates. This is Nucleoside triphosphate/diphosphate phosphatase from Staphylococcus aureus (strain Mu3 / ATCC 700698).